Consider the following 1047-residue polypeptide: Probable sucrose-phosphate synthase 2 (1047 aa).

The segment covering 101 to 123 has biased composition (basic and acidic residues); it reads EGKNAKREAKREREREKARREVT. The tract at residues 101–153 is disordered; sequence EGKNAKREAKREREREKARREVTAEMSEDFSEGEKADLPGEIPTPSDNNTKGR. A phosphoserine mark is found at Ser-127, Ser-131, and Ser-159. Residues 712–731 form a disordered region; sequence KSGSNNGVDTNLDAEDRAAE.

This sequence belongs to the glycosyltransferase 1 family. Homodimer or homotetramer. In terms of tissue distribution, expressed in roots, cauline leaves, flower buds, flowers and anthers. Highly expressed in maturing nectaries.

The catalysed reaction is beta-D-fructose 6-phosphate + UDP-alpha-D-glucose = sucrose 6(F)-phosphate + UDP + H(+). The protein operates within glycan biosynthesis; sucrose biosynthesis; sucrose from D-fructose 6-phosphate and UDP-alpha-D-glucose: step 1/2. With respect to regulation, activity is regulated by phosphorylation and moderated by concentration of metabolites and light. Plays a role in photosynthetic sucrose synthesis by catalyzing the rate-limiting step of sucrose biosynthesis from UDP-glucose and fructose- 6-phosphate. Involved in the regulation of carbon partitioning in the leaves of plants. May regulate the synthesis of sucrose and therefore play a major role as a limiting factor in the export of photoassimilates out of the leaf. Plays a role for sucrose availability that is essential for plant growth and fiber elongation. Required for nectar secretion. This is Probable sucrose-phosphate synthase 2 (SPS2) from Arabidopsis thaliana (Mouse-ear cress).